Consider the following 259-residue polypeptide: UPF0246 protein PST_1170 (259 aa).

It belongs to the UPF0246 family.

This chain is UPF0246 protein PST_1170, found in Stutzerimonas stutzeri (strain A1501) (Pseudomonas stutzeri).